Consider the following 210-residue polypeptide: Uracil phosphoribosyltransferase (210 aa).

Residues arginine 78, arginine 103, and 130 to 138 (DPMLATGGT) each bind 5-phospho-alpha-D-ribose 1-diphosphate. Residues isoleucine 193 and 198–200 (GDA) each bind uracil. Aspartate 199 lines the 5-phospho-alpha-D-ribose 1-diphosphate pocket.

The protein belongs to the UPRTase family. Mg(2+) serves as cofactor.

It carries out the reaction UMP + diphosphate = 5-phospho-alpha-D-ribose 1-diphosphate + uracil. Its pathway is pyrimidine metabolism; UMP biosynthesis via salvage pathway; UMP from uracil: step 1/1. Allosterically activated by GTP. Functionally, catalyzes the conversion of uracil and 5-phospho-alpha-D-ribose 1-diphosphate (PRPP) to UMP and diphosphate. This is Uracil phosphoribosyltransferase from Xanthomonas axonopodis pv. citri (strain 306).